Consider the following 405-residue polypeptide: tRNA N6-adenosine threonylcarbamoyltransferase, mitochondrial (405 aa).

A mitochondrion-targeting transit peptide spans 1-19 (MAKYISNLSRIAVVRGRVS). Residues H138 and H142 each contribute to the a divalent metal cation site. Residues 160 to 164 (LISGG), D193, G213, E217, 320 to 321 (SN), and T348 each bind substrate. Residue D349 participates in a divalent metal cation binding.

Belongs to the KAE1 / TsaD family. Monomer. The cofactor is a divalent metal cation.

The protein localises to the mitochondrion. It carries out the reaction L-threonylcarbamoyladenylate + adenosine(37) in tRNA = N(6)-L-threonylcarbamoyladenosine(37) in tRNA + AMP + H(+). Functionally, required for the formation of a threonylcarbamoyl group on adenosine at position 37 (t(6)A37) in mitochondrial tRNAs that read codons beginning with adenine. Probably involved in the transfer of the threonylcarbamoyl moiety of threonylcarbamoyl-AMP (TC-AMP) to the N6 group of A37. Involved in mitochondrial genome maintenance. The chain is tRNA N6-adenosine threonylcarbamoyltransferase, mitochondrial from Xenopus tropicalis (Western clawed frog).